The sequence spans 259 residues: Chymotrypsin-1 (259 aa).

The first 17 residues, 1 to 17 (MLRKVFAVVSVLLVVSA), serve as a signal peptide directing secretion. The propeptide at 18–32 (AKVTKLVLDDNYVNR) is activation peptide. One can recognise a Peptidase S1 domain in the interval 33-255 (VVGGEVAKNG…YHDWVRTTMA (223 aa)). Residues Cys-59 and Cys-75 are joined by a disulfide bond. Residues His-74 and Asp-119 each act as charge relay system in the active site. 2 cysteine pairs are disulfide-bonded: Cys-182–Cys-198 and Cys-208–Cys-232. Ser-212 functions as the Charge relay system in the catalytic mechanism.

The protein belongs to the peptidase S1 family. As to expression, after blood feeding, expression is induced in the midgut epithelium, followed by secretion into the midgut lumen.

The protein resides in the secreted. The catalysed reaction is Preferential cleavage: Tyr-|-Xaa, Trp-|-Xaa, Phe-|-Xaa, Leu-|-Xaa.. The chain is Chymotrypsin-1 (CHYM1) from Anopheles gambiae (African malaria mosquito).